Here is a 338-residue protein sequence, read N- to C-terminus: Malate dehydrogenase, mitochondrial (338 aa).

The transit peptide at 1–24 (MLSALARPAGAALRRSFSTSAQNN) directs the protein to the mitochondrion. Residues 31–37 (GASGGIG) and Asp57 contribute to the NAD(+) site. Ser33 carries an O-linked (GalNAc...) serine glycan. N6-acetyllysine; alternate occurs at positions 78 and 91. An N6-succinyllysine; alternate mark is found at Lys78 and Lys91. The substrate site is built by Arg104 and Arg110. NAD(+) contacts are provided by residues Asn117 and 140-142 (ISN). Residue Asn142 coordinates substrate. An N6-acetyllysine modification is found at Lys165. Asp173 (proton relay) is an active-site residue. Position 176 (Arg176) interacts with substrate. Lys185 is modified (N6-acetyllysine; alternate). N6-succinyllysine; alternate is present on Lys185. His200 acts as the Proton acceptor in catalysis. Lys203 carries the N6-succinyllysine modification. 2 positions are modified to N6-acetyllysine; alternate: Lys215 and Lys239. An N6-succinyllysine; alternate mark is found at Lys215 and Lys239. Residue Lys239 is modified to N6-malonyllysine; alternate. Ser246 bears the Phosphoserine mark. Met251 is a binding site for NAD(+). N6-succinyllysine is present on Lys269. N6-acetyllysine; alternate is present on residues Lys296, Lys301, Lys307, Lys314, and Lys324. N6-succinyllysine; alternate occurs at positions 296, 301, 307, 314, and 324. Lys307 carries the N6-malonyllysine; alternate modification. Ser326 bears the Phosphoserine mark. 3 positions are modified to N6-acetyllysine; alternate: Lys328, Lys329, and Lys335. The residue at position 328 (Lys328) is an N6-succinyllysine; alternate. Lys329 carries the N6-malonyllysine; alternate modification. An N6-succinyllysine; alternate modification is found at Lys335.

This sequence belongs to the LDH/MDH superfamily. MDH type 1 family. In terms of assembly, homodimer. Acetylation is enhanced after treatment either with trichostin A (TSA) or with nicotinamide (NAM) with the appearance of tri- and tetraacetylations. Glucose also increases acetylation. Ubiquitously expressed. Highly expressed in skeletal muscle and heart. Also expressed in liver, ileum, colon, kidney and adipose tissue, and at very low levels in lung, pancreas, stomach and spleen.

Its subcellular location is the mitochondrion matrix. The enzyme catalyses (S)-malate + NAD(+) = oxaloacetate + NADH + H(+). Enzyme activity is enhanced by acetylation. This is Malate dehydrogenase, mitochondrial from Felis catus (Cat).